A 436-amino-acid polypeptide reads, in one-letter code: UPF0597 protein YhaM (436 aa).

The protein belongs to the UPF0597 family.

The protein is UPF0597 protein YhaM of Shigella sonnei (strain Ss046).